Here is a 208-residue protein sequence, read N- to C-terminus: Cysteine-rich protein 2 (208 aa).

The LIM zinc-binding 1 domain maps to cysteine 5–cysteine 57. Lysine 23 is subject to N6-acetyllysine. Residues alanine 98–phenylalanine 119 form a disordered region. Serine 104 is modified (phosphoserine). The region spanning cysteine 126–cysteine 178 is the LIM zinc-binding 2 domain. N6-acetyllysine occurs at positions 138 and 144.

As to quaternary structure, interacts with TGFB1I1. As to expression, widespread tissue expression; highest levels in the heart.

This is Cysteine-rich protein 2 (CRIP2) from Homo sapiens (Human).